The following is a 244-amino-acid chain: Nicotinamidase 1 (244 aa).

The protein belongs to the isochorismatase family. As to expression, expressed in roots and stems, and at lower levels in flowers, siliques and leaves.

It catalyses the reaction nicotinamide + H2O = nicotinate + NH4(+). It functions in the pathway cofactor biosynthesis; nicotinate biosynthesis; nicotinate from nicotinamide: step 1/1. Its function is as follows. Catalyzes the deamidation of nicotinamide, an early step in the NAD(+) salvage pathway. Prevents the accumulation of intracellular nicotinamide, a known inhibitor of poly(ADP-ribose) polymerases (PARP enzymes). This is Nicotinamidase 1 from Arabidopsis thaliana (Mouse-ear cress).